A 425-amino-acid chain; its full sequence is Aspyridones cluster regulator (425 aa).

The zn(2)-C6 fungal-type DNA-binding region spans 100–127; sequence CVDCRASKTRCTGEPEGCKRCTFRKRPC. The segment at 132–159 is disordered; it reads LRRSNTTQHGEQIEASSSTFTMSDEQGS. Polar residues predominate over residues 133–157; sequence RRSNTTQHGEQIEASSSTFTMSDEQ.

The protein localises to the nucleus. In terms of biological role, transcription factor involved in regulation of gene cluster that mediates the biosynthesis of aphidicolin. The sequence is that of Aspyridones cluster regulator (TF) from Neocamarosporium betae (Beet black rot fungus).